A 512-amino-acid polypeptide reads, in one-letter code: Activin receptor type-2B (512 aa).

Residues 1–18 form the signal peptide; it reads MTAPWVALALLWGSLCAG. Over 19–137 the chain is Extracellular; that stretch reads SGRGEAETRE…PPPTAPTLLT (119 aa). Disulfide bonds link Cys-29-Cys-59, Cys-49-Cys-77, Cys-84-Cys-103, Cys-90-Cys-102, and Cys-104-Cys-109. N-linked (GlcNAc...) asparagine glycans are attached at residues Asn-42 and Asn-65. Residues 138 to 158 traverse the membrane as a helical segment; that stretch reads VLAYSLLPIGGLSLIVLLAFW. Topologically, residues 159 to 512 are cytoplasmic; the sequence is MYRHRKPPYG…VDLPPKESSI (354 aa). One can recognise a Protein kinase domain in the interval 190–480; that stretch reads LQLLEIKARG…AGCVEERVSL (291 aa). Residues 196-204 and Lys-217 each bind ATP; that span reads KARGRFGCV. The Proton acceptor role is filled by Asp-321. Positions 491–512 are interaction with DYNLT1; the sequence is DCLVSLVTSVTNVDLPPKESSI.

The protein belongs to the protein kinase superfamily. TKL Ser/Thr protein kinase family. TGFB receptor subfamily. As to quaternary structure, forms an activin receptor complex with activin type II receptors such as ACVR1B. Interacts with VPS39. Interacts with DYNLT1. Interacts with BMP3. Interacts with BMP2. Interacts with BMP6. Requires Mg(2+) as cofactor. Mn(2+) is required as a cofactor. In terms of processing, phosphorylated. Constitutive phosphorylation is in part catalyzed by its own kinase activity.

It is found in the cell membrane. The catalysed reaction is L-threonyl-[receptor-protein] + ATP = O-phospho-L-threonyl-[receptor-protein] + ADP + H(+). The enzyme catalyses L-seryl-[receptor-protein] + ATP = O-phospho-L-seryl-[receptor-protein] + ADP + H(+). In terms of biological role, transmembrane serine/threonine kinase activin type-2 receptor forming an activin receptor complex with activin type-1 serine/threonine kinase receptors (ACVR1, ACVR1B or ACVR1c). Transduces the activin signal from the cell surface to the cytoplasm and is thus regulating many physiological and pathological processes including neuronal differentiation and neuronal survival, hair follicle development and cycling, FSH production by the pituitary gland, wound healing, extracellular matrix production, immunosuppression and carcinogenesis. Activin is also thought to have a paracrine or autocrine role in follicular development in the ovary. Within the receptor complex, the type-2 receptors act as a primary activin receptors (binds activin-A/INHBA, activin-B/INHBB as well as inhibin-A/INHA-INHBA). The type-1 receptors like ACVR1B act as downstream transducers of activin signals. Activin binds to type-2 receptor at the plasma membrane and activates its serine-threonine kinase. The activated receptor type-2 then phosphorylates and activates the type-1 receptor. Once activated, the type-1 receptor binds and phosphorylates the SMAD proteins SMAD2 and SMAD3, on serine residues of the C-terminal tail. Soon after their association with the activin receptor and subsequent phosphorylation, SMAD2 and SMAD3 are released into the cytoplasm where they interact with the common partner SMAD4. This SMAD complex translocates into the nucleus where it mediates activin-induced transcription. Inhibitory SMAD7, which is recruited to ACVR1B through FKBP1A, can prevent the association of SMAD2 and SMAD3 with the activin receptor complex, thereby blocking the activin signal. Activin signal transduction is also antagonized by the binding to the receptor of inhibin-B via the IGSF1 inhibin coreceptor. This Homo sapiens (Human) protein is Activin receptor type-2B (ACVR2B).